Reading from the N-terminus, the 289-residue chain is Glycine--tRNA ligase alpha subunit (289 aa).

This sequence belongs to the class-II aminoacyl-tRNA synthetase family. In terms of assembly, tetramer of two alpha and two beta subunits.

The protein resides in the cytoplasm. It catalyses the reaction tRNA(Gly) + glycine + ATP = glycyl-tRNA(Gly) + AMP + diphosphate. This is Glycine--tRNA ligase alpha subunit (glyQ) from Rickettsia prowazekii (strain Madrid E).